A 320-amino-acid polypeptide reads, in one-letter code: Malate dehydrogenase (320 aa).

Residues 10 to 15 and Asp-34 contribute to the NAD(+) site; that span reads GAGQIG. Substrate-binding residues include Arg-83 and Arg-89. Residues Asn-96 and 119 to 121 contribute to the NAD(+) site; that span reads ITN. Residues Asn-121 and Arg-152 each contribute to the substrate site. His-176 (proton acceptor) is an active-site residue.

It belongs to the LDH/MDH superfamily. MDH type 3 family.

It carries out the reaction (S)-malate + NAD(+) = oxaloacetate + NADH + H(+). Functionally, catalyzes the reversible oxidation of malate to oxaloacetate. The sequence is that of Malate dehydrogenase from Cereibacter sphaeroides (strain ATCC 17025 / ATH 2.4.3) (Rhodobacter sphaeroides).